A 221-amino-acid chain; its full sequence is Pectate lyase C (221 aa).

Positions 1 to 28 (MKRLAGTVILSGLLVCGFGQALPEKALA) are cleaved as a signal peptide.

It belongs to the polysaccharide lyase 3 family. It depends on Ca(2+) as a cofactor.

Its subcellular location is the secreted. The catalysed reaction is Eliminative cleavage of (1-&gt;4)-alpha-D-galacturonan to give oligosaccharides with 4-deoxy-alpha-D-galact-4-enuronosyl groups at their non-reducing ends.. It catalyses the reaction Eliminative cleavage of (1-&gt;4)-alpha-D-galacturonan methyl ester to give oligosaccharides with 4-deoxy-6-O-methyl-alpha-D-galact-4-enuronosyl groups at their non-reducing ends.. It functions in the pathway glycan metabolism; pectin degradation; 2-dehydro-3-deoxy-D-gluconate from pectin: step 2/5. Catalyzes the depolymerization of both polygalacturonate and pectins of methyl esterification degree from 22 to 89%, with an endo mode of action. In contrast to the majority of pectate lyases, displays high activity on highly methylated pectins. The protein is Pectate lyase C (pelC) of Bacillus licheniformis (strain ATCC 14580 / DSM 13 / JCM 2505 / CCUG 7422 / NBRC 12200 / NCIMB 9375 / NCTC 10341 / NRRL NRS-1264 / Gibson 46).